Here is a 152-residue protein sequence, read N- to C-terminus: Protein-export protein SecB (152 aa).

It belongs to the SecB family. Homotetramer, a dimer of dimers. One homotetramer interacts with 1 SecA dimer.

It localises to the cytoplasm. Functionally, one of the proteins required for the normal export of preproteins out of the cell cytoplasm. It is a molecular chaperone that binds to a subset of precursor proteins, maintaining them in a translocation-competent state. It also specifically binds to its receptor SecA. The chain is Protein-export protein SecB from Verminephrobacter eiseniae (strain EF01-2).